The sequence spans 435 residues: MAEAEEDCHSDAVRVGDEGHESPAERDLQAQLQMFRAQWMFELTPGVGSSNVESRPCRAGRSSILKAAADKGRQELAKEEKARELFLKAVEEEQNGALYEAIKFYRRAMQLVPDIEFKITYTRSPDGDGVGSSYIEDNEDASKMADLLSYFQQQLTFQESVLKLCQPELETSQTHISVLPMEVLMYIFRWVVSSDLDLRSLEQLSLVCRGFYICARDPEIWRLACLKVWGRSCMKLVPFSSWREMFLERPRVRFDGVYISKTTYIRQGEQSLDGFYRAWHQVEYYRYIRFFPDGHVMMLTTPEEPPSIVPRLRTRNTRTDAILLGHYRLSQDADNQTKVFAVITKKKEEKPLDHKYRYFRRVPVQEADHNFHVGLQLCSSGHQRFNKLIWIHHSCHITYRSTGETAVSAFDIDKMYTPLFFARVRSYTAFSERPL.

The segment at 1-25 is disordered; sequence MAEAEEDCHSDAVRVGDEGHESPAE. The span at 7–25 shows a compositional bias: basic and acidic residues; the sequence is DCHSDAVRVGDEGHESPAE. Residues 82-115 form a TPR repeat; it reads ARELFLKAVEEEQNGALYEAIKFYRRAMQLVPDI. Ser124 carries the post-translational modification Phosphoserine. One can recognise an F-box domain in the interval 173–224; that stretch reads QTHISVLPMEVLMYIFRWVVSSDLDLRSLEQLSLVCRGFYICARDPEIWRLA.

In terms of assembly, part of the SCF (SKP1-CUL1-F-box) E3 ubiquitin-protein ligase complex SCF(FBXO9) composed of CUL1, SKP1, RBX1 and FBXO9. Interacts with TTI1 and TELO2; when TTI1 and TELO2 are phosphorylated by CK2.

The protein resides in the cytoplasm. Its pathway is protein modification; protein ubiquitination. Its function is as follows. Substrate recognition component of a SCF (SKP1-CUL1-F-box protein) E3 ubiquitin-protein ligase complex which mediates the ubiquitination and subsequent proteasomal degradation of target proteins and plays a role in several biological processes such as cell cycle, cell proliferation, or maintenance of chromosome stability. Ubiquitinates mTORC1-bound TTI1 and TELO2 when they are phosphorylated by CK2 following growth factor deprivation, leading to their degradation. In contrast, does not mediate ubiquitination of TTI1 and TELO2 when they are part of the mTORC2 complex. As a consequence, mTORC1 is inactivated to restrain cell growth and protein translation, while mTORC2 is the activated due to the relief of feedback inhibition by mTORC1. Plays a role in maintaining epithelial cell survival by regulating the turn-over of chromatin modulator PRMT4 through ubiquitination and degradation by the proteasomal pathway. Also regulates PPARgamma stability by facilitating PPARgamma/PPARG ubiquitination and thereby plays a role in adipocyte differentiation. The protein is F-box only protein 9 (Fbxo9) of Rattus norvegicus (Rat).